Here is a 1346-residue protein sequence, read N- to C-terminus: Toll-like receptor Tollo (1346 aa).

Residues Met1–Gly21 form the signal peptide. The Extracellular portion of the chain corresponds to Ala22–Pro1021. N-linked (GlcNAc...) asparagine glycans are attached at residues Asn63, Asn112, and Asn126. LRR repeat units follow at residues Leu97–Gly120, Leu124–Asn146, Phe151–Pro174, Lys176–Ala198, Gly209–Ala232, Gly234–Gly256, Leu257–Glu280, Lys282–Glu304, Ala306–Gly330, Leu331–Pro354, Leu355–Asp378, Thr380–Gly402, Lys404–Asn426, Cys427–Val450, Leu452–Gln473, Leu474–Arg497, Met498–Arg521, Ser523–Glu544, Pro546–Ile568, Leu570–Ser591, Leu593–Pro614, Asn615–Lys637, and Lys638–Leu661. N-linked (GlcNAc...) asparagine glycosylation occurs at Asn182. An N-linked (GlcNAc...) asparagine glycan is attached at Asn291. N-linked (GlcNAc...) asparagine glycosylation is present at Asn426. The N-linked (GlcNAc...) asparagine glycan is linked to Asn468. Residue Asn505 is glycosylated (N-linked (GlcNAc...) asparagine). Asn552 carries N-linked (GlcNAc...) asparagine glycosylation. A glycan (N-linked (GlcNAc...) asparagine) is linked at Asn640. 4 disulfides stabilise this stretch: Cys682–Cys710, Cys684–Cys733, Cys757–Cys763, and Cys761–Cys776. LRR repeat units follow at residues Pro790 to Gly813, Arg814 to Gly837, Leu838 to Gly861, Asp863 to His885, Tyr887 to Pro909, and Leu912 to Arg938. Asn823 and Asn832 each carry an N-linked (GlcNAc...) asparagine glycan. Cys924 and Cys950 are joined by a disulfide. N-linked (GlcNAc...) asparagine glycans are attached at residues Asn956 and Asn1000. The chain crosses the membrane as a helical span at residues Ile1022–Ile1042. Residues Phe1043–Met1346 are Cytoplasmic-facing. The region spanning Lys1074–Leu1209 is the TIR domain. Residues His1235 to Met1346 are disordered. A compositionally biased stretch (low complexity) spans Pro1267–Gln1300.

This sequence belongs to the Toll-like receptor family. As to quaternary structure, may interact (via the extracellular domain) with 18w (via the extracellular domain).

It localises to the cell membrane. The protein localises to the apical cell membrane. Toll-related receptor. Probably specific to larval innate immunity. Involved in the tracheal immune response of larvae to Gram-negative and perhaps Gram-positive bacteria; upon infection it negatively regulates the immune deficiency (Imd) signaling cascade specifically in the respiratory epithelium to prevent the overexpression of antimicrobial peptides (AMP). Involved in the NF-kappa-B-dependent apoptosis of unfit cells during cell competition. Involved in neuron-specific glycosylation. Positively controls the neuromuscular junction (NMJ) growth in presynaptic motorneurons, probably via the JNK pathway. During development of the peripheral nervous system, may function in the NF-kappa-B (rel) regulatory cascade to repress expression of the neuron-specific genes sc and ase in non-neuronal cells. Promotes heterophilic cell adhesion with 18w in vitro. May have a minor role in leg development. May be involved in determining the proximal cell fate in the wing, possibly by negatively regulating the Dpp signaling pathway. May also be involved in the Dpp signaling pathway in the eye. Possibly functions with 18w and Toll-6 during convergent extension, to help direct proper planar cell polarity, cell intercalation and axis elongation. The polypeptide is Toll-like receptor Tollo (Drosophila melanogaster (Fruit fly)).